A 352-amino-acid polypeptide reads, in one-letter code: Very-long-chain 3-oxoacyl-CoA reductase (352 aa).

Residues 20–40 (TLWFIFIFGLLKLVPFALRFL) form a helical membrane-spanning segment. NADP(+) is bound by residues Val66, Asp120, Asn147, Tyr228, Lys232, Val261, and Ser263. The active-site Proton donor is the Tyr228. Catalysis depends on Lys232, which acts as the Lowers pKa of active site Tyr.

Belongs to the short-chain dehydrogenases/reductases (SDR) family.

It is found in the endoplasmic reticulum membrane. The enzyme catalyses a very-long-chain (3R)-3-hydroxyacyl-CoA + NADP(+) = a very-long-chain 3-oxoacyl-CoA + NADPH + H(+). Its pathway is lipid metabolism; fatty acid biosynthesis. Its function is as follows. Component of the microsomal membrane bound fatty acid elongation system, which produces the 26-carbon very long-chain fatty acids (VLCFA) from palmitate. Catalyzes the reduction of the 3-ketoacyl-CoA intermediate that is formed in each cycle of fatty acid elongation. VLCFAs serve as precursors for ceramide and sphingolipids. The chain is Very-long-chain 3-oxoacyl-CoA reductase from Candida glabrata (strain ATCC 2001 / BCRC 20586 / JCM 3761 / NBRC 0622 / NRRL Y-65 / CBS 138) (Yeast).